A 443-amino-acid polypeptide reads, in one-letter code: Ribosomal protein uS12 methylthiotransferase RimO (443 aa).

The region spanning P5–P115 is the MTTase N-terminal domain. [4Fe-4S] cluster is bound by residues C14, C50, C79, C147, C151, and C154. Residues L133–A374 enclose the Radical SAM core domain. The TRAM domain occupies Q377–C443.

The protein belongs to the methylthiotransferase family. RimO subfamily. [4Fe-4S] cluster serves as cofactor.

The protein localises to the cytoplasm. The catalysed reaction is L-aspartate(89)-[ribosomal protein uS12]-hydrogen + (sulfur carrier)-SH + AH2 + 2 S-adenosyl-L-methionine = 3-methylsulfanyl-L-aspartate(89)-[ribosomal protein uS12]-hydrogen + (sulfur carrier)-H + 5'-deoxyadenosine + L-methionine + A + S-adenosyl-L-homocysteine + 2 H(+). In terms of biological role, catalyzes the methylthiolation of an aspartic acid residue of ribosomal protein uS12. The sequence is that of Ribosomal protein uS12 methylthiotransferase RimO from Actinobacillus pleuropneumoniae serotype 7 (strain AP76).